A 141-amino-acid polypeptide reads, in one-letter code: Hydroperoxide reductase (141 aa).

The protein belongs to the OsmC/Ohr family. Homodimer.

The protein localises to the cytoplasm. Its function is as follows. Reduces organic and inorganic peroxide substrates. Protects the cell against oxidative stress. In Mycoplasma pneumoniae (strain ATCC 29342 / M129 / Subtype 1) (Mycoplasmoides pneumoniae), this protein is Hydroperoxide reductase.